Here is a 244-residue protein sequence, read N- to C-terminus: Carboxy-S-adenosyl-L-methionine synthase (244 aa).

Residues tyrosine 41, 66–68 (GCS), asparagine 134, and arginine 201 contribute to the S-adenosyl-L-methionine site.

The protein belongs to the class I-like SAM-binding methyltransferase superfamily. Cx-SAM synthase family. In terms of assembly, homodimer.

It catalyses the reaction prephenate + S-adenosyl-L-methionine = carboxy-S-adenosyl-L-methionine + 3-phenylpyruvate + H2O. In terms of biological role, catalyzes the conversion of S-adenosyl-L-methionine (SAM) to carboxy-S-adenosyl-L-methionine (Cx-SAM). The polypeptide is Carboxy-S-adenosyl-L-methionine synthase (Cellvibrio japonicus (strain Ueda107) (Pseudomonas fluorescens subsp. cellulosa)).